We begin with the raw amino-acid sequence, 229 residues long: Galactonate operon transcriptional repressor (229 aa).

Residues 1–71 enclose the HTH gntR-type domain; the sequence is MTLNKTDRIV…RYRGAFVAPR (71 aa). The H-T-H motif DNA-binding region spans 31 to 50; that stretch reads EAELCEEFATSRNIIREVFR. Zn(2+)-binding residues include Asp-146, His-150, and His-195.

As to quaternary structure, homodimer.

Its activity is regulated as follows. D-galactonate binds DgoR and induces a conformational change in the protein, which decreases its affinity for DNA and consequently derepresses transcription of the dgoRKADT operon. Involved in the regulation of D-galactonate metabolism. Represses the expression of the dgoRKADT operon by binding to two closely spaced inverted repeats in the cis-acting element, which overlap with the D-galactonate responsive dgo promoter. Employs a derepression mechanism using D-galactonate as a specific effector molecule. The polypeptide is Galactonate operon transcriptional repressor (Escherichia coli (strain K12)).